Consider the following 252-residue polypeptide: Triosephosphate isomerase (252 aa).

A substrate-binding site is contributed by 9–11 (NWK). Histidine 95 (electrophile) is an active-site residue. The active-site Proton acceptor is the glutamate 167. Substrate-binding positions include glycine 173, serine 213, and 234-235 (GG). At serine 213 the chain carries Phosphoserine.

The protein belongs to the triosephosphate isomerase family. In terms of assembly, homodimer.

The protein resides in the cytoplasm. The catalysed reaction is D-glyceraldehyde 3-phosphate = dihydroxyacetone phosphate. The protein operates within carbohydrate biosynthesis; gluconeogenesis. Its pathway is carbohydrate degradation; glycolysis; D-glyceraldehyde 3-phosphate from glycerone phosphate: step 1/1. Its function is as follows. Involved in the gluconeogenesis. Catalyzes stereospecifically the conversion of dihydroxyacetone phosphate (DHAP) to D-glyceraldehyde-3-phosphate (G3P). The protein is Triosephosphate isomerase of Oceanobacillus iheyensis (strain DSM 14371 / CIP 107618 / JCM 11309 / KCTC 3954 / HTE831).